The following is a 240-amino-acid chain: Ribosomal RNA small subunit methyltransferase G (240 aa).

Residues Gly-77, Phe-82, 128–129 (AE), and Arg-148 each bind S-adenosyl-L-methionine. The disordered stretch occupies residues 217-240 (EKRSKTPKKYPRKAGTPNKSPLLK).

Belongs to the methyltransferase superfamily. RNA methyltransferase RsmG family.

It is found in the cytoplasm. In terms of biological role, specifically methylates the N7 position of guanine in position 535 of 16S rRNA. The sequence is that of Ribosomal RNA small subunit methyltransferase G from Staphylococcus carnosus (strain TM300).